The primary structure comprises 467 residues: ADAM DEC1 (467 aa).

An N-terminal signal peptide occupies residues 1-33; the sequence is MLPGTSRLPTEASMSWVLLSVLWLIIQIQVIDA. The propeptide occupies 34–208; it reads TLTPELKPHE…LRTSRSLKNP (175 aa). N-linked (GlcNAc...) asparagine glycans are attached at residues Asn61 and Asn236. In terms of domain architecture, Peptidase M12B spans 217–411; the sequence is KYIGLFLVLD…RNARCLLLAP (195 aa). 2 disulfide bridges follow: Cys327–Cys406 and Cys368–Cys373. Zn(2+) is bound at residue His351. Glu352 is a catalytic residue. Residues His355 and Asp361 each coordinate Zn(2+). Positions 418–467 constitute a Disintegrin domain; the sequence is KPTCGNQVLDVGEECDCGSPEECTNLCCEPLTCRLKSQPDCSEASNHITE.

Requires Zn(2+) as cofactor. As to expression, expressed highly in uterus during pregnancy.

It localises to the secreted. May play an important role in the control of the immune response and during pregnancy. This Mus musculus (Mouse) protein is ADAM DEC1 (Adamdec1).